Reading from the N-terminus, the 349-residue chain is Cdc42 effector protein 4 (349 aa).

Residue lysine 5 is modified to N6-methyllysine. A Phosphoserine modification is found at serine 18. A CRIB domain is found at isoleucine 27–glycine 41. Phosphoserine occurs at positions 64, 103, 107, and 116. Basic and acidic residues predominate over residues lysine 123 to lysine 132. Disordered stretches follow at residues lysine 123 to glutamate 172, glutamine 220 to serine 240, and glycine 278 to valine 349. Serine 136, serine 138, serine 140, serine 154, serine 165, serine 223, serine 285, and serine 288 each carry phosphoserine. Low complexity predominate over residues alanine 280–serine 308. The span at leucine 311–aspartate 322 shows a compositional bias: basic and acidic residues. The segment covering phenylalanine 338–valine 349 has biased composition (acidic residues).

The protein belongs to the BORG/CEP family. In terms of assembly, interacts with CDC42 and RHOQ, in a GTP-dependent manner. In terms of tissue distribution, ubiquitous.

The protein resides in the endomembrane system. Its subcellular location is the cytoplasm. The protein localises to the cytoskeleton. Functionally, probably involved in the organization of the actin cytoskeleton. May act downstream of CDC42 to induce actin filament assembly leading to cell shape changes. Induces pseudopodia formation, when overexpressed in fibroblasts. The sequence is that of Cdc42 effector protein 4 (Cdc42ep4) from Mus musculus (Mouse).